We begin with the raw amino-acid sequence, 473 residues long: PTS system trehalose-specific EIIBC component (473 aa).

Positions 1–89 (MMSKINQTDI…IASTGQAQVD (89 aa)) constitute a PTS EIIB type-1 domain. At 1–110 (MMSKINQTDI…MKWHEQLISH (110 aa)) the chain is on the cytoplasmic side. The Phosphocysteine intermediate; for EIIB activity role is filled by cysteine 29. The residue at position 29 (cysteine 29) is a Phosphocysteine; by EIIA. A PTS EIIC type-1 domain is found at 109 to 473 (SHFAVIFFPL…KYRLGTLDIV (365 aa)). A helical membrane pass occupies residues 111–131 (FAVIFFPLLPALISGGLILGF). Residues 132–158 (RNVIGDLPMSNGQTLAQMYPSLQTIYD) lie on the Periplasmic side of the membrane. Residues 159–179 (FLWLIGEAIFFYLPVGICWSA) form a helical membrane-spanning segment. Residues 180-187 (VKKMGGTP) lie on the Cytoplasmic side of the membrane. A helical transmembrane segment spans residues 188–208 (ILGIVLGVTLVSPQLMNAYLL). The Periplasmic segment spans residues 209-225 (GQQLPEVWDFGMFSIAK). A helical membrane pass occupies residues 226 to 246 (VGYQAQVIPALLAGLALGVIE). The Cytoplasmic segment spans residues 247–258 (TRLKRIVPDYLY). A helical membrane pass occupies residues 259–279 (LVVVPVCSLILAVFLAHALIG). Residues 280–300 (PFGRMIGDGVAFAVRHLMTGS) are Periplasmic-facing. A helical membrane pass occupies residues 301–321 (FAPIGAALFGFLYAPLVITGV). Residues 322-340 (HQTTLAIDLQMIQSMGGTP) are Cytoplasmic-facing. A helical transmembrane segment spans residues 341-361 (VWPLIALSNIAQGSAVIGIII). Residues 362 to 370 (SSRKHNERE) lie on the Periplasmic side of the membrane. Residues 371 to 391 (ISVPAAISAWLGVTEPAMYGI) form a helical membrane-spanning segment. Residues 392-398 (NLKYRFP) are Cytoplasmic-facing. A helical membrane pass occupies residues 399-419 (MLCAMIGSGLAGLLCGLNGVM). Residues 420–440 (ANGIGVGGLPGILSIQPSYWQ) lie on the Periplasmic side of the membrane. The chain crosses the membrane as a helical span at residues 441-461 (VFALAMAIAIIIPIVLTSFIY). Residues 462-473 (QRKYRLGTLDIV) are Cytoplasmic-facing.

It localises to the cell inner membrane. It catalyses the reaction alpha,alpha-trehalose(out) + N(pros)-phospho-L-histidyl-[protein] = alpha,alpha-trehalose 6-phosphate(in) + L-histidyl-[protein]. Functionally, the phosphoenolpyruvate-dependent sugar phosphotransferase system (sugar PTS), a major carbohydrate active transport system, catalyzes the phosphorylation of incoming sugar substrates concomitantly with their translocation across the cell membrane. This system is involved in trehalose transport at low osmolarity. The sequence is that of PTS system trehalose-specific EIIBC component (treB) from Escherichia coli (strain K12).